The following is a 259-amino-acid chain: Thiazole synthase (259 aa).

The active-site Schiff-base intermediate with DXP is Lys-95. 1-deoxy-D-xylulose 5-phosphate contacts are provided by residues Gly-156, 182-183 (AG), and 204-205 (NT).

This sequence belongs to the ThiG family. In terms of assembly, homotetramer. Forms heterodimers with either ThiH or ThiS.

It is found in the cytoplasm. It catalyses the reaction [ThiS sulfur-carrier protein]-C-terminal-Gly-aminoethanethioate + 2-iminoacetate + 1-deoxy-D-xylulose 5-phosphate = [ThiS sulfur-carrier protein]-C-terminal Gly-Gly + 2-[(2R,5Z)-2-carboxy-4-methylthiazol-5(2H)-ylidene]ethyl phosphate + 2 H2O + H(+). It participates in cofactor biosynthesis; thiamine diphosphate biosynthesis. Its function is as follows. Catalyzes the rearrangement of 1-deoxy-D-xylulose 5-phosphate (DXP) to produce the thiazole phosphate moiety of thiamine. Sulfur is provided by the thiocarboxylate moiety of the carrier protein ThiS. In vitro, sulfur can be provided by H(2)S. This is Thiazole synthase from Baumannia cicadellinicola subsp. Homalodisca coagulata.